The following is a 152-amino-acid chain: Regulatory protein RecX (152 aa).

Belongs to the RecX family.

It localises to the cytoplasm. Modulates RecA activity. The chain is Regulatory protein RecX from Haemophilus influenzae (strain PittGG).